Consider the following 372-residue polypeptide: Homoserine dehydrogenase (372 aa).

NAD(+)-binding residues include Val13, Gly15, Val16, and Thr99. NADP(+) is bound by residues Val16 and Thr99. Residues Val16, Thr99, Ser100, and Lys123 each coordinate NADPH. NADP(+) is bound at residue Lys123. Residues Glu150, Val153, Ala155, and Leu157 each contribute to the Na(+) site. Residues Gly216 and Glu219 each contribute to the NADP(+) site. L-homoserine-binding residues include Glu219 and Asp230. Residue Lys234 is the Proton donor of the active site. Gly352 is a binding site for NAD(+). Gly352 contacts NADP(+). Gly352 provides a ligand contact to NADPH.

Belongs to the homoserine dehydrogenase family. In terms of assembly, homodimer. Requires a metal cation as cofactor.

It carries out the reaction L-homoserine + NADP(+) = L-aspartate 4-semialdehyde + NADPH + H(+). It catalyses the reaction L-homoserine + NAD(+) = L-aspartate 4-semialdehyde + NADH + H(+). It functions in the pathway amino-acid biosynthesis; L-methionine biosynthesis via de novo pathway; L-homoserine from L-aspartate: step 3/3. Its pathway is amino-acid biosynthesis; L-threonine biosynthesis; L-threonine from L-aspartate: step 3/5. Its function is as follows. Catalyzes the conversion of L-aspartate-beta-semialdehyde (L-Asa) to L-homoserine (L-Hse), the third step in the biosynthesis of amino acids that derive from aspartate (the aspartate family of amino acids), including methioinine and threonine, the latter of which is a precursor to isoleucine; production of homoserine leads to a branch-point in the pathway as it can either be O-phosphorylated for processing to threonine, or O-acylated for processing to methionine. This Paracoccidioides brasiliensis (strain Pb18) protein is Homoserine dehydrogenase.